The sequence spans 196 residues: DnaA initiator-associating protein DiaA (196 aa).

The region spanning 34–196 (LVQSLLNGNK…DNTLFPHQDD (163 aa)) is the SIS domain.

This sequence belongs to the SIS family. DiaA subfamily. In terms of assembly, homotetramer; dimer of dimers.

Required for the timely initiation of chromosomal replication via direct interactions with the DnaA initiator protein. The sequence is that of DnaA initiator-associating protein DiaA from Klebsiella pneumoniae (strain 342).